The primary structure comprises 69 residues: UPF0150 protein Ta0767 (69 aa).

The protein belongs to the UPF0150 family.

This chain is UPF0150 protein Ta0767, found in Thermoplasma acidophilum (strain ATCC 25905 / DSM 1728 / JCM 9062 / NBRC 15155 / AMRC-C165).